The chain runs to 359 residues: Phosphate acyltransferase (359 aa).

Positions 338–359 (LEGAAGRAARPPPPRRASSHDA) are disordered.

It belongs to the PlsX family. Homodimer. Probably interacts with PlsY.

The protein resides in the cytoplasm. It catalyses the reaction a fatty acyl-[ACP] + phosphate = an acyl phosphate + holo-[ACP]. Its pathway is lipid metabolism; phospholipid metabolism. Functionally, catalyzes the reversible formation of acyl-phosphate (acyl-PO(4)) from acyl-[acyl-carrier-protein] (acyl-ACP). This enzyme utilizes acyl-ACP as fatty acyl donor, but not acyl-CoA. The protein is Phosphate acyltransferase of Anaeromyxobacter sp. (strain Fw109-5).